Reading from the N-terminus, the 317-residue chain is UV DNA damage endonuclease (317 aa).

Belongs to the uve1/UvsE family.

Component in a DNA repair pathway. Removal of UV LIGHT damaged nucleotides. Recognizes pyrimidine dimers and cleave a phosphodiester bond immediately 5' to the lesion. The sequence is that of UV DNA damage endonuclease from Bacillus cereus (strain G9842).